The chain runs to 402 residues: Calcium-responsive transactivator (402 aa).

Positions 1-148 (MSVAFASARP…TLPTTSMSLS (148 aa)) are N-terminal auto-inhibitory domain; necessary for interaction with SMARCA4/BRG1. Positions 50–53 (YQQI) match the SH2-binding motif. Disordered stretches follow at residues 72–171 (QSLL…VPMQ) and 221–402 (AMMG…NYQQ). The segment covering 85-106 (LGPGALSQSGSSQGLHPQGSLS) has biased composition (low complexity). Polar residues-rich tracts occupy residues 128–149 (NHVSMQQTAQSTLPTTSMSLSG) and 161–171 (SGPTSQSVPMQ). The segment at 149–238 (GSGHGTGPGY…GGSMMGQRPM (90 aa)) is methionine-rich intra-molecular domain. Over residues 233–251 (MGQRPMAPYRPSQQGSSQQ) the composition is skewed to low complexity. Positions 252-323 (YLGQEEYYSE…SQYSQQQAGY (72 aa)) are MFD domain. Polar residues predominate over residues 261 to 277 (EQYSHSQGSAEPMSQQY). A compositionally biased stretch (basic and acidic residues) spans 296-305 (SYDRSFEDPT). Positions 311–375 (GGNSQYSQQQ…QGQGQQYGSY (65 aa)) are enriched in low complexity. Residues 340-402 (NQQSYPGQQQ…EQGQYGNYQQ (63 aa)) form a necessary for nuclear localization region. An SH2-binding motif is present at residues 359–362 (SQYS). A compositionally biased stretch (polar residues) spans 376–388 (RTSQTGPSAQQQR). Positions 377–385 (TSQTGPSAQ) match the SH3-binding motif. The segment covering 390–402 (YGYEQGQYGNYQQ) has biased composition (low complexity). The necessary for interaction with CREBBP and for the recruitment of CREBBP to the nuclear bodies stretch occupies residues 393 to 402 (EQGQYGNYQQ). The SH2-binding signature appears at 397–400 (YGNY).

This sequence belongs to the SS18 family. As to quaternary structure, homodimer. Dimerization may be necessary for its function in neuronal dendritic development. Interacts (via C-terminus) with CREBBP (via N-terminus), EP300 and SMARCA4/BRG1. Interacts with the nBAF complex. Association with CREBBP facilitates transcription while the association with SMARCA4/BRG1 suppresses CREST-mediated transcription in resting neurons.

Its subcellular location is the nucleus. It localises to the chromosome. The protein resides in the centromere. It is found in the kinetochore. Transcriptional activator which is required for calcium-dependent dendritic growth and branching in cortical neurons. Recruits CREB-binding protein (CREBBP) to nuclear bodies. Component of the CREST-BRG1 complex, a multiprotein complex that regulates promoter activation by orchestrating a calcium-dependent release of a repressor complex and a recruitment of an activator complex. In resting neurons, transcription of the c-FOS promoter is inhibited by BRG1-dependent recruitment of a phospho-RB1-HDAC1 repressor complex. Upon calcium influx, RB1 is dephosphorylated by calcineurin, which leads to release of the repressor complex. At the same time, there is increased recruitment of CREBBP to the promoter by a CREST-dependent mechanism, which leads to transcriptional activation. The CREST-BRG1 complex also binds to the NR2B promoter, and activity-dependent induction of NR2B expression involves a release of HDAC1 and recruitment of CREBBP. This is Calcium-responsive transactivator (Ss18l1) from Mus musculus (Mouse).